A 115-amino-acid polypeptide reads, in one-letter code: NADH-ubiquinone oxidoreductase chain 3 (115 aa).

3 helical membrane passes run 3 to 23, 55 to 75, and 86 to 106; these read LMAT…IAFW, FFLV…LLPL, and LTLL…AYEW.

It belongs to the complex I subunit 3 family. In terms of assembly, core subunit of respiratory chain NADH dehydrogenase (Complex I) which is composed of 45 different subunits. Interacts with TMEM186. Interacts with TMEM242.

The protein localises to the mitochondrion inner membrane. It carries out the reaction a ubiquinone + NADH + 5 H(+)(in) = a ubiquinol + NAD(+) + 4 H(+)(out). Core subunit of the mitochondrial membrane respiratory chain NADH dehydrogenase (Complex I) which catalyzes electron transfer from NADH through the respiratory chain, using ubiquinone as an electron acceptor. Essential for the catalytic activity of complex I. The chain is NADH-ubiquinone oxidoreductase chain 3 from Mammuthus primigenius (Siberian woolly mammoth).